The sequence spans 251 residues: Triosephosphate isomerase (251 aa).

Substrate is bound at residue 9 to 11; sequence NWK. His96 functions as the Electrophile in the catalytic mechanism. The Proton acceptor role is filled by Glu166. Residues Gly172, Ser212, and 233–234 each bind substrate; that span reads GG.

Belongs to the triosephosphate isomerase family. In terms of assembly, homodimer.

It is found in the cytoplasm. The catalysed reaction is D-glyceraldehyde 3-phosphate = dihydroxyacetone phosphate. The protein operates within carbohydrate biosynthesis; gluconeogenesis. It participates in carbohydrate degradation; glycolysis; D-glyceraldehyde 3-phosphate from glycerone phosphate: step 1/1. Its function is as follows. Involved in the gluconeogenesis. Catalyzes stereospecifically the conversion of dihydroxyacetone phosphate (DHAP) to D-glyceraldehyde-3-phosphate (G3P). In Pelodictyon phaeoclathratiforme (strain DSM 5477 / BU-1), this protein is Triosephosphate isomerase.